Here is a 318-residue protein sequence, read N- to C-terminus: Aspartate carbamoyltransferase catalytic subunit (318 aa).

The carbamoyl phosphate site is built by Arg-62 and Thr-63. Lys-90 provides a ligand contact to L-aspartate. Carbamoyl phosphate-binding residues include Arg-112, His-140, and Gln-143. Residues Arg-173 and Arg-227 each contribute to the L-aspartate site. Positions 268 and 269 each coordinate carbamoyl phosphate.

It belongs to the aspartate/ornithine carbamoyltransferase superfamily. ATCase family. As to quaternary structure, heterododecamer (2C3:3R2) of six catalytic PyrB chains organized as two trimers (C3), and six regulatory PyrI chains organized as three dimers (R2).

It catalyses the reaction carbamoyl phosphate + L-aspartate = N-carbamoyl-L-aspartate + phosphate + H(+). It participates in pyrimidine metabolism; UMP biosynthesis via de novo pathway; (S)-dihydroorotate from bicarbonate: step 2/3. Catalyzes the condensation of carbamoyl phosphate and aspartate to form carbamoyl aspartate and inorganic phosphate, the committed step in the de novo pyrimidine nucleotide biosynthesis pathway. In Desulfotalea psychrophila (strain LSv54 / DSM 12343), this protein is Aspartate carbamoyltransferase catalytic subunit.